Consider the following 134-residue polypeptide: Translation initiation factor 2 subunit beta (134 aa).

This sequence belongs to the eIF-2-beta/eIF-5 family. As to quaternary structure, heterotrimer composed of an alpha, a beta and a gamma chain.

Functionally, eIF-2 functions in the early steps of protein synthesis by forming a ternary complex with GTP and initiator tRNA. The sequence is that of Translation initiation factor 2 subunit beta from Pyrobaculum neutrophilum (strain DSM 2338 / JCM 9278 / NBRC 100436 / V24Sta) (Thermoproteus neutrophilus).